Reading from the N-terminus, the 477-residue chain is Aspartyl/glutamyl-tRNA(Asn/Gln) amidotransferase subunit B (477 aa).

The protein belongs to the GatB/GatE family. GatB subfamily. In terms of assembly, heterotrimer of A, B and C subunits.

The enzyme catalyses L-glutamyl-tRNA(Gln) + L-glutamine + ATP + H2O = L-glutaminyl-tRNA(Gln) + L-glutamate + ADP + phosphate + H(+). The catalysed reaction is L-aspartyl-tRNA(Asn) + L-glutamine + ATP + H2O = L-asparaginyl-tRNA(Asn) + L-glutamate + ADP + phosphate + 2 H(+). Functionally, allows the formation of correctly charged Asn-tRNA(Asn) or Gln-tRNA(Gln) through the transamidation of misacylated Asp-tRNA(Asn) or Glu-tRNA(Gln) in organisms which lack either or both of asparaginyl-tRNA or glutaminyl-tRNA synthetases. The reaction takes place in the presence of glutamine and ATP through an activated phospho-Asp-tRNA(Asn) or phospho-Glu-tRNA(Gln). This is Aspartyl/glutamyl-tRNA(Asn/Gln) amidotransferase subunit B from Coxiella burnetii (strain RSA 493 / Nine Mile phase I).